The following is a 329-amino-acid chain: MTQLFYDTDADLSLLNNKTIAIIGYGSQGHAHALNLKDSGMDVIVGLYKGSKSESKAISDGLKVFSVSEACEKADWIMILLPDEFQKDVYLKEIEPNLKEGKILSFAHGFNIRFGLIKPPSFVDVVMIAPKGPGHTVRWEYQNGQGVPALFAVEQDSSGSARSLAMAYAKGIGGTRAGILETNFKEETETDLFGEQAVLCGGLSELVKSGFETLVEAGYQPELAYFECLHEVKLIVDLMVKGGLSQMRDSISNTAEYGDYVSGKRLINSDTKKEMQKILKDIQDGTFAKNFVEECDKDKPLMTKLREENSKHEIEKVGKSLRSMFSWLK.

Residues 2-182 (TQLFYDTDAD…GGTRAGILET (181 aa)) form the KARI N-terminal Rossmann domain. NADP(+) is bound by residues 25-28 (YGSQ), Ser-51, Ser-53, and 83-86 (DEFQ). His-108 is an active-site residue. Gly-134 is a binding site for NADP(+). The KARI C-terminal knotted domain occupies 183–328 (NFKEETETDL…KSLRSMFSWL (146 aa)). Positions 191, 195, 227, and 231 each coordinate Mg(2+). Residue Ser-252 participates in substrate binding.

Belongs to the ketol-acid reductoisomerase family. Requires Mg(2+) as cofactor.

It catalyses the reaction (2R)-2,3-dihydroxy-3-methylbutanoate + NADP(+) = (2S)-2-acetolactate + NADPH + H(+). It carries out the reaction (2R,3R)-2,3-dihydroxy-3-methylpentanoate + NADP(+) = (S)-2-ethyl-2-hydroxy-3-oxobutanoate + NADPH + H(+). It participates in amino-acid biosynthesis; L-isoleucine biosynthesis; L-isoleucine from 2-oxobutanoate: step 2/4. The protein operates within amino-acid biosynthesis; L-valine biosynthesis; L-valine from pyruvate: step 2/4. Its function is as follows. Involved in the biosynthesis of branched-chain amino acids (BCAA). Catalyzes an alkyl-migration followed by a ketol-acid reduction of (S)-2-acetolactate (S2AL) to yield (R)-2,3-dihydroxy-isovalerate. In the isomerase reaction, S2AL is rearranged via a Mg-dependent methyl migration to produce 3-hydroxy-3-methyl-2-ketobutyrate (HMKB). In the reductase reaction, this 2-ketoacid undergoes a metal-dependent reduction by NADPH to yield (R)-2,3-dihydroxy-isovalerate. This chain is Ketol-acid reductoisomerase (NADP(+)), found in Prochlorococcus marinus (strain MIT 9301).